The sequence spans 492 residues: Cytochrome P450 monooxygenase ATEG_03631 (492 aa).

The helical transmembrane segment at Phe-10–Leu-30 threads the bilayer. Asn-309 is a glycosylation site (N-linked (GlcNAc...) asparagine). Cys-457 contacts heme.

It belongs to the cytochrome P450 family. Requires heme as cofactor.

It is found in the membrane. Its pathway is secondary metabolite biosynthesis. Its function is as follows. Cytochrome P450 monooxygenase; part of the cluster A that mediates the biosynthesis of azasperpyranones, members of the azaphilone family that exhibit anti-cancer activities. Azasperpyranones are synthesized by 2 clusters, A and B. Cluster A is responsible for the production of the polyhydric phenol moiety while the azaphilonoid scaffold is produced by the cluster B. The non-reducing polyketide synthase ATEG_03629 produces 5-methyl orsellinic acid, which is then reduced to 5-methyl orsellinic aldehyde by the NRPS-like protein ATEG_03630. 5-methyl orsellinic aldehyde is then first hydroxylated by the FAD-dependent monooxygenase ATEG_03635 and subsequently hydroxylated by the cytochrome P450 monooxygenase ATEG_03631 to produce the unstable polyhydric phenol precursor of azasperpyranones. On the other hand, the polyketide synthase ATEG_07659 is responsible for producing the 3,5-dimethyloctadienone moiety from acetyl-CoA, three malonyl-CoA, and two S-adenosyl methionines (SAM). The 3,5-dimethyloctadienone moiety is then loaded onto the SAT domain of ATEG_07661 and extended with four malonyl-CoA and one SAM, which leads to the formation of 2,4-dihydroxy-6-(5,7-dimethyl-2-oxo-trans-3-trans-5-nonadienyl)-3-methylbenzaldehyde (compound 8) after reductive release and aldol condensation. The FAD-dependent monooxygenase ATEG_07662 is the next enzyme in the biosynthesis sequence and hydroxylates the side chain at the benzylic position of compound 8. In Aspergillus nidulans, afoF, the ortholog of the FAD-dependent oxygenase ATEG_07660, is the key enzyme for the biosynthesis of asperfuranone by catalyzing the hydroxylation at C-8 of to prevent the formation of a six-membered ring hemiacetal intermediate and thus facilitating the formation of a five-membered ring to produce asperfuranone. In Aspergillus terreus, ATEG_07660 is probably not functional, which leads to the formation of the six-membered ring hemiacetal intermediate presperpyranone instead of asperfuranone. Finally, ATEG_03636 is involved in the condensation of the polyhydric phenol moiety produced by cluster A and the perasperpyranone precursor produced by cluster B, to yield azasperpyranone A. Further modifications of azasperpyranone A result in the production of derivatives, including azasperpyranone B to F. In Aspergillus terreus (strain NIH 2624 / FGSC A1156), this protein is Cytochrome P450 monooxygenase ATEG_03631.